Here is a 134-residue protein sequence, read N- to C-terminus: ATP synthase epsilon chain (134 aa).

Belongs to the ATPase epsilon chain family. In terms of assembly, F-type ATPases have 2 components, CF(1) - the catalytic core - and CF(0) - the membrane proton channel. CF(1) has five subunits: alpha(3), beta(3), gamma(1), delta(1), epsilon(1). CF(0) has three main subunits: a, b and c.

The protein localises to the cell inner membrane. In terms of biological role, produces ATP from ADP in the presence of a proton gradient across the membrane. The polypeptide is ATP synthase epsilon chain (Sinorhizobium medicae (strain WSM419) (Ensifer medicae)).